The chain runs to 142 residues: ATP synthase epsilon chain (142 aa).

The protein belongs to the ATPase epsilon chain family. As to quaternary structure, F-type ATPases have 2 components, CF(1) - the catalytic core - and CF(0) - the membrane proton channel. CF(1) has five subunits: alpha(3), beta(3), gamma(1), delta(1), epsilon(1). CF(0) has three main subunits: a, b and c.

Its subcellular location is the cell inner membrane. In terms of biological role, produces ATP from ADP in the presence of a proton gradient across the membrane. The chain is ATP synthase epsilon chain from Shewanella pealeana (strain ATCC 700345 / ANG-SQ1).